The following is a 98-amino-acid chain: Cytochrome c-552 (98 aa).

An N-terminal signal peptide occupies residues 1 to 18; it reads MKKFLLVAVVGLAGITFA. Cys-28, Cys-31, His-32, and Met-77 together coordinate heme c.

This sequence belongs to the cytochrome c family. In terms of processing, binds 1 heme c group covalently per subunit.

Reacts with hydrogenase. The polypeptide is Cytochrome c-552 (Hydrogenobacter thermophilus (strain DSM 6534 / IAM 12695 / TK-6)).